The sequence spans 889 residues: Alanine--tRNA ligase (889 aa).

The Zn(2+) site is built by H569, H573, C671, and H675.

This sequence belongs to the class-II aminoacyl-tRNA synthetase family. Zn(2+) serves as cofactor.

The protein resides in the cytoplasm. It carries out the reaction tRNA(Ala) + L-alanine + ATP = L-alanyl-tRNA(Ala) + AMP + diphosphate. In terms of biological role, catalyzes the attachment of alanine to tRNA(Ala) in a two-step reaction: alanine is first activated by ATP to form Ala-AMP and then transferred to the acceptor end of tRNA(Ala). Also edits incorrectly charged Ser-tRNA(Ala) and Gly-tRNA(Ala) via its editing domain. This is Alanine--tRNA ligase from Synechococcus sp. (strain CC9605).